The primary structure comprises 638 residues: Threonine--tRNA ligase (638 aa).

The TGS domain maps to 1-61; that stretch reads MPIITLPDGS…NSDSKVVIIT (61 aa). The segment at 242-533 is catalytic; the sequence is DHRKLGKKHS…LIEQYEAKFP (292 aa). Positions 333, 384, and 510 each coordinate Zn(2+).

Belongs to the class-II aminoacyl-tRNA synthetase family. Homodimer. Requires Zn(2+) as cofactor.

The protein localises to the cytoplasm. The enzyme catalyses tRNA(Thr) + L-threonine + ATP = L-threonyl-tRNA(Thr) + AMP + diphosphate + H(+). Functionally, catalyzes the attachment of threonine to tRNA(Thr) in a two-step reaction: L-threonine is first activated by ATP to form Thr-AMP and then transferred to the acceptor end of tRNA(Thr). Also edits incorrectly charged L-seryl-tRNA(Thr). This chain is Threonine--tRNA ligase, found in Prochlorococcus marinus (strain MIT 9215).